A 262-amino-acid polypeptide reads, in one-letter code: Hydroxyethylthiazole kinase (262 aa).

M50 is a substrate binding site. Positions 125 and 171 each coordinate ATP. G198 serves as a coordination point for substrate.

This sequence belongs to the Thz kinase family. Mg(2+) serves as cofactor.

It carries out the reaction 5-(2-hydroxyethyl)-4-methylthiazole + ATP = 4-methyl-5-(2-phosphooxyethyl)-thiazole + ADP + H(+). Its pathway is cofactor biosynthesis; thiamine diphosphate biosynthesis; 4-methyl-5-(2-phosphoethyl)-thiazole from 5-(2-hydroxyethyl)-4-methylthiazole: step 1/1. Functionally, catalyzes the phosphorylation of the hydroxyl group of 4-methyl-5-beta-hydroxyethylthiazole (THZ). The protein is Hydroxyethylthiazole kinase of Shigella boydii serotype 18 (strain CDC 3083-94 / BS512).